The sequence spans 253 residues: MGTILDKIVDQKKKEVAALYETYTPVKEKRKTRSLVKALEQFTVIAEVKRASPSKGDINLHVDVRKQVKTYEGCGAGAVSVLTDGQFFKGSFYDLQTAREESSIPLLCKDFIIDKIQIDRAYEAGADIILLIVAALTKEKLKELYSYVLEKGLEAIVEVHDEKELEIAIQLNPHVIGINNRNLKTFEVDLSQTEKLGKRLNEEKLLWISESGIHSKEDIICVKRAGAKGVLVGEALMTSSSIHTFFEDCKVNI.

This sequence belongs to the TrpC family.

The catalysed reaction is 1-(2-carboxyphenylamino)-1-deoxy-D-ribulose 5-phosphate + H(+) = (1S,2R)-1-C-(indol-3-yl)glycerol 3-phosphate + CO2 + H2O. The protein operates within amino-acid biosynthesis; L-tryptophan biosynthesis; L-tryptophan from chorismate: step 4/5. The sequence is that of Indole-3-glycerol phosphate synthase from Bacillus thuringiensis (strain Al Hakam).